The sequence spans 354 residues: Peptide chain release factor 1 (354 aa).

Position 230 is an N5-methylglutamine (Q230).

The protein belongs to the prokaryotic/mitochondrial release factor family. In terms of processing, methylated by PrmC. Methylation increases the termination efficiency of RF1.

Its subcellular location is the cytoplasm. Peptide chain release factor 1 directs the termination of translation in response to the peptide chain termination codons UAG and UAA. The chain is Peptide chain release factor 1 from Thermus thermophilus (strain ATCC BAA-163 / DSM 7039 / HB27).